A 116-amino-acid polypeptide reads, in one-letter code: Large ribosomal subunit protein uL22 (116 aa).

This sequence belongs to the universal ribosomal protein uL22 family. As to quaternary structure, part of the 50S ribosomal subunit.

In terms of biological role, this protein binds specifically to 23S rRNA; its binding is stimulated by other ribosomal proteins, e.g. L4, L17, and L20. It is important during the early stages of 50S assembly. It makes multiple contacts with different domains of the 23S rRNA in the assembled 50S subunit and ribosome. Its function is as follows. The globular domain of the protein is located near the polypeptide exit tunnel on the outside of the subunit, while an extended beta-hairpin is found that lines the wall of the exit tunnel in the center of the 70S ribosome. The protein is Large ribosomal subunit protein uL22 of Wolbachia pipientis subsp. Culex pipiens (strain wPip).